The sequence spans 293 residues: NAD kinase (293 aa).

The active-site Proton acceptor is Asp-74. NAD(+) is bound by residues 74–75 (DG), 148–149 (NE), His-159, Arg-176, Asp-178, Thr-186, 189–194 (TAYSLS), and Gln-248.

Belongs to the NAD kinase family. As to quaternary structure, homodimer. Requires a divalent metal cation as cofactor.

Its subcellular location is the cytoplasm. It carries out the reaction NAD(+) + ATP = ADP + NADP(+) + H(+). In terms of biological role, involved in the regulation of the intracellular balance of NAD and NADP, and is a key enzyme in the biosynthesis of NADP. Catalyzes specifically the phosphorylation on 2'-hydroxyl of the adenosine moiety of NAD to yield NADP. The polypeptide is NAD kinase (Yersinia pestis).